The sequence spans 448 residues: Ribosomal protein uS12 methylthiotransferase RimO (448 aa).

The region spanning 7–123 (EKVSLVSLGC…IAEIIAEKKQ (117 aa)) is the MTTase N-terminal domain. Cysteine 16, cysteine 52, cysteine 86, cysteine 161, cysteine 165, and cysteine 168 together coordinate [4Fe-4S] cluster. A Radical SAM core domain is found at 147–377 (SSPHYTAYLK…MRTQARVSFK (231 aa)). Positions 380-448 (RTLVDSEEDV…DYDLIGEIVD (69 aa)) constitute a TRAM domain.

This sequence belongs to the methylthiotransferase family. RimO subfamily. It depends on [4Fe-4S] cluster as a cofactor.

The protein localises to the cytoplasm. It catalyses the reaction L-aspartate(89)-[ribosomal protein uS12]-hydrogen + (sulfur carrier)-SH + AH2 + 2 S-adenosyl-L-methionine = 3-methylsulfanyl-L-aspartate(89)-[ribosomal protein uS12]-hydrogen + (sulfur carrier)-H + 5'-deoxyadenosine + L-methionine + A + S-adenosyl-L-homocysteine + 2 H(+). In terms of biological role, catalyzes the methylthiolation of an aspartic acid residue of ribosomal protein uS12. This is Ribosomal protein uS12 methylthiotransferase RimO from Citrifermentans bemidjiense (strain ATCC BAA-1014 / DSM 16622 / JCM 12645 / Bem) (Geobacter bemidjiensis).